Here is a 135-residue protein sequence, read N- to C-terminus: uncharacterized protein (135 aa).

The stretch at 68–135 (DEVDNYIRVF…KKESEDEDEL (68 aa)) forms a coiled coil. Residues 88 to 135 (EKIVGKPPKSTSAPDIDELEEEPDEETEEKSEEKTEKKKKESEDEDEL) form a disordered region. A compositionally biased stretch (acidic residues) spans 102–117 (DIDELEEEPDEETEEK). Basic and acidic residues predominate over residues 118-129 (SEEKTEKKKKES).

This is an uncharacterized protein from Acidianus hospitalis (AFV-1).